Here is a 156-residue protein sequence, read N- to C-terminus: Probable chemoreceptor glutamine deamidase CheD (156 aa).

Belongs to the CheD family.

The catalysed reaction is L-glutaminyl-[protein] + H2O = L-glutamyl-[protein] + NH4(+). In terms of biological role, probably deamidates glutamine residues to glutamate on methyl-accepting chemotaxis receptors (MCPs), playing an important role in chemotaxis. This chain is Probable chemoreceptor glutamine deamidase CheD, found in Bdellovibrio bacteriovorus (strain ATCC 15356 / DSM 50701 / NCIMB 9529 / HD100).